The following is a 218-amino-acid chain: Peptide methionine sulfoxide reductase MsrA (218 aa).

Cys57 is an active-site residue.

This sequence belongs to the MsrA Met sulfoxide reductase family.

The catalysed reaction is L-methionyl-[protein] + [thioredoxin]-disulfide + H2O = L-methionyl-(S)-S-oxide-[protein] + [thioredoxin]-dithiol. It catalyses the reaction [thioredoxin]-disulfide + L-methionine + H2O = L-methionine (S)-S-oxide + [thioredoxin]-dithiol. Its function is as follows. Has an important function as a repair enzyme for proteins that have been inactivated by oxidation. Catalyzes the reversible oxidation-reduction of methionine sulfoxide in proteins to methionine. In Brucella melitensis biotype 1 (strain ATCC 23456 / CCUG 17765 / NCTC 10094 / 16M), this protein is Peptide methionine sulfoxide reductase MsrA.